Here is a 219-residue protein sequence, read N- to C-terminus: Transmembrane protein 125 (219 aa).

The next 4 membrane-spanning stretches (helical) occupy residues 36 to 56 (LCFV…VALL), 68 to 88 (LATG…QLMS), 114 to 134 (ALVV…LAGL), and 147 to 167 (MLSV…GLLL).

It localises to the membrane. This is Transmembrane protein 125 (TMEM125) from Homo sapiens (Human).